The primary structure comprises 682 residues: Methionine--tRNA ligase (682 aa).

A 'HIGH' region motif is present at residues 12–22 (PYANGAIHLGH). 4 residues coordinate Zn(2+): Cys-143, Cys-146, Cys-156, and Cys-159. The 'KMSKS' region signature appears at 328–332 (KMSKS). Lys-331 lines the ATP pocket. The 103-residue stretch at 580 to 682 (DFAKLDLRVA…EGIRPGMQVK (103 aa)) folds into the tRNA-binding domain.

It belongs to the class-I aminoacyl-tRNA synthetase family. MetG type 1 subfamily. Homodimer. It depends on Zn(2+) as a cofactor.

Its subcellular location is the cytoplasm. The enzyme catalyses tRNA(Met) + L-methionine + ATP = L-methionyl-tRNA(Met) + AMP + diphosphate. In terms of biological role, is required not only for elongation of protein synthesis but also for the initiation of all mRNA translation through initiator tRNA(fMet) aminoacylation. The chain is Methionine--tRNA ligase from Actinobacillus pleuropneumoniae serotype 7 (strain AP76).